A 245-amino-acid polypeptide reads, in one-letter code: Anti-Pycsar protein Apyc1 (245 aa).

The segment at 19–219 (FNNNALLYAG…EIQSQILLKH (201 aa)) is beta-lactamase-like. The Zn(2+) site is built by His-61, His-63, Asp-65, His-66, His-145, Asp-165, and His-219.

It belongs to the anti-Pycsar protein Apyc1 family. As to quaternary structure, homodimer. Zn(2+) is required as a cofactor.

The enzyme catalyses 3',5'-cyclic CMP + H2O = CMP + H(+). It catalyses the reaction 3',5'-cyclic UMP + H2O = UMP + H(+). Functionally, counteracts the endogenous Pycsar antiviral defense system. Phosphodiesterase that enables metal-dependent hydrolysis of host cyclic nucleotide Pycsar defense signals such as cCMP and cUMP. The sequence is that of Anti-Pycsar protein Apyc1 from Paenibacillus sp. (strain J14).